A 447-amino-acid polypeptide reads, in one-letter code: MDQTCSLESFLNHVQKRDPHQTEFAQAVREVMTTLWPFLEQNPRYRHMSLLERLVEPERVIQFRVVWLDDKNQVQVNRAWRVQFNSAIGPYKGGMRFHPSVNLSILKFLGFEQTFKNALTTLPMGGGKGGSDFDPKGKSEGEVMRFCQALMTELYRHLGPDTDVPAGDIGVGGREVGFMAGMMRKLSNNSSCVFTGKGLSFGGSLIRPEATGYGLVYFTEAMLKRHGLGFEGMRVAVSGSGNVAQYAIEKAMAFGARVVTASDSSGTVVDESGFTPEKLARLCEIKASRDGRVADYAREFGLTYLEGQQPWSVPVDIALPCATQNELDVDAARVLIANGVKAVAEGANMPTTIEATDLFLEAGVLFAPGKAANAGGVATSGLEMAQNAARLSWKAEKVDARLHHIMLDIHHACVEYGGDNKHTNYVQGANIAGFVKVADAMLAQGVI.

The substrate site is built by Lys-92, Gln-113, and Lys-116. Residue Lys-128 is the Proton donor of the active site. Position 167 (Gly-167) interacts with substrate. Thr-211 and Asn-242 together coordinate NADP(+). Ser-380 lines the substrate pocket.

This sequence belongs to the Glu/Leu/Phe/Val dehydrogenases family. As to quaternary structure, homohexamer.

The catalysed reaction is L-glutamate + NADP(+) + H2O = 2-oxoglutarate + NH4(+) + NADPH + H(+). In terms of biological role, catalyzes the reversible oxidative deamination of glutamate to alpha-ketoglutarate and ammonia. The polypeptide is NADP-specific glutamate dehydrogenase (gdhA) (Salmonella typhimurium (strain LT2 / SGSC1412 / ATCC 700720)).